The chain runs to 538 residues: Cytochrome P450 18a1 (538 aa).

The chain crosses the membrane as a helical span at residues 24–44 (QHLLMVFLGLLALVTLLQWLV). Cys-466 contacts heme.

Belongs to the cytochrome P450 family. The cofactor is heme. As to expression, expressed in body wall (epidermal and muscle cells) and mid- and hind-gut.

It is found in the endoplasmic reticulum membrane. The protein resides in the microsome membrane. Its function is as follows. Probably involved in steroid hormones biosynthesis. The polypeptide is Cytochrome P450 18a1 (Cyp18a1) (Drosophila melanogaster (Fruit fly)).